Reading from the N-terminus, the 199-residue chain is Recombination protein RecR (199 aa).

The C4-type zinc finger occupies 56–71 (CQRCNTFTEGDICERC). Positions 79 to 174 (ELLCVVETPV…GVTRIARGVP (96 aa)) constitute a Toprim domain.

This sequence belongs to the RecR family.

Functionally, may play a role in DNA repair. It seems to be involved in an RecBC-independent recombinational process of DNA repair. It may act with RecF and RecO. In Dechloromonas aromatica (strain RCB), this protein is Recombination protein RecR.